Reading from the N-terminus, the 219-residue chain is Ribose-5-phosphate isomerase A (219 aa).

Substrate is bound by residues Thr28–Thr31, Asp81–Asp84, and Lys94–Gly97. Glu103 acts as the Proton acceptor in catalysis. Lys121 is a binding site for substrate.

It belongs to the ribose 5-phosphate isomerase family. As to quaternary structure, homodimer.

It carries out the reaction aldehydo-D-ribose 5-phosphate = D-ribulose 5-phosphate. Its pathway is carbohydrate degradation; pentose phosphate pathway; D-ribose 5-phosphate from D-ribulose 5-phosphate (non-oxidative stage): step 1/1. In terms of biological role, catalyzes the reversible conversion of ribose-5-phosphate to ribulose 5-phosphate. The sequence is that of Ribose-5-phosphate isomerase A from Nitrosomonas europaea (strain ATCC 19718 / CIP 103999 / KCTC 2705 / NBRC 14298).